Reading from the N-terminus, the 103-residue chain is Large ribosomal subunit protein bL21 (103 aa).

The protein belongs to the bacterial ribosomal protein bL21 family. As to quaternary structure, part of the 50S ribosomal subunit. Contacts protein L20.

This protein binds to 23S rRNA in the presence of protein L20. The protein is Large ribosomal subunit protein bL21 of Clostridioides difficile (strain 630) (Peptoclostridium difficile).